The chain runs to 773 residues: Mitochondrial inner membrane m-AAA protease component yta12 (773 aa).

Residues 83–119 (FSVTSKRSQNGSSGSNSDANGRKNGQKNDDSKKKGLN) form a disordered region. Residues 87–101 (SKRSQNGSSGSNSDA) are compositionally biased toward low complexity. 2 helical membrane passes run 126 to 146 (VFEIALNGNTILGGILVAYIL) and 239 to 259 (VLATLLSFAPTLLIIGSVIYL). 8 residues coordinate ATP: Val-298, Ala-299, Thr-340, Gly-341, Lys-342, Thr-343, Leu-344, and His-479. His-561 contacts Zn(2+). The active site involves Glu-562. His-565 and Asp-638 together coordinate Zn(2+). Residues 752–773 (EYKNDHDPRNPPIPPSPQQPSA) form a disordered region. Positions 761 to 773 (NPPIPPSPQQPSA) are enriched in pro residues.

This sequence in the N-terminal section; belongs to the AAA ATPase family. In the C-terminal section; belongs to the peptidase M41 family. As to quaternary structure, component of the m-AAA protease complex. Requires Zn(2+) as cofactor.

The protein resides in the mitochondrion membrane. The catalysed reaction is ATP + H2O = ADP + phosphate + H(+). Functionally, catalytic component of the m-AAA protease, a protease that plays a key role in proteostasis of inner mitochondrial membrane proteins. Possesses both ATPase and protease activities: the ATPase activity is required to unfold substrates, threading them into the internal proteolytic cavity for hydrolysis into small peptide fragments. The complex is necessary for the assembly of mitochondrial respiratory chain and ATPase complexes. The m-AAA protease carries out protein quality control in the inner membrane of the mitochondria by mediating degradation of mistranslated or misfolded polypeptides. It also mediates protein maturation of the mitochondrial ribosomal subunit mrpl32/bL32m by catalyzing the cleavage of the presequence of mrpl32/bL32m prior to assembly into the mitochondrial ribosome. Also acts as a membrane protein dislocase: required to dislocate moderately hydrophobic transmembrane segments from the membrane. This chain is Mitochondrial inner membrane m-AAA protease component yta12 (yta12), found in Schizosaccharomyces pombe (strain 972 / ATCC 24843) (Fission yeast).